The primary structure comprises 580 residues: Serine/threonine-protein kinase PINK1, mitochondrial (580 aa).

A mitochondrion-targeting transit peptide spans 1–77 (MAVRQALGRG…RFFRQSVAGL (77 aa)). Residues 28–60 (VSGWGKPGPGAAWGRGERPGRVSSPGAQPRPLG) form a disordered region. Residues 94-110 (GPCGRAVFLAFGLGLGL) traverse the membrane as a helical segment. Positions 111-117 (IEEKQAE) are required for outer membrane localization. Residues 156-510 (YLIGQAIGKG…IAANVLHLSL (355 aa)) form the Protein kinase domain. ATP contacts are provided by residues 162–170 (IGKGCNAAV) and lysine 218. At serine 227 the chain carries Phosphoserine; by autocatalysis. Aspartate 361 serves as the catalytic Proton acceptor. Residue serine 401 is modified to Phosphoserine; by autocatalysis.

This sequence belongs to the protein kinase superfamily. Ser/Thr protein kinase family. In terms of assembly, upon mitochondrial depolarization, it forms a supercomplex with TOM and TIM23 complexes. PINK1-TOM-TIM23 supercomplex formation requires PINK1 interaction with TOMM20 and TOMM70 and is critical for PINK1 stabilization at the outer mitochondrial membrane, kinase activation and downstream mitophagy. Upon mitochondrial depolarization, interacts with TIMM23; the interaction is required for PINK1 accumulation at the outer mitochondrial membrane, kinase activation by autophosphorylation and PRKN recruitement to mitochondria. Interacts with PRKN. Interacts with FBXO7. Forms a complex with PRKN and PARK7. Interacts with NENF. The cofactor is Mg(2+). In terms of processing, proteolytically cleaved. In healthy cells, the precursor is continuously imported into the inner mitochondrial membrane (IMM), where it is proteolytically cleaved by mitochondrial-processing peptidase (MPP) and then undergoes further proteolytic cleavage by PARL or AFG3L2 to give rise to the 52 kDa short form. The 52 kDa short form is then released into the cytosol where it rapidly undergoes proteasome-dependent degradation. In unhealthy cells, when cellular stress conditions lead to the loss of mitochondrial membrane potential, mitochondrial import is impaired leading to the precursor accumulating on the outer mitochondrial membrane (OMM). If accumulation at the OMM fails and it is imported into the depolarized mitochondria, it undergoes cleavage by the IMM protease OMA1, promoting its subsequent degradation by the proteasome. Autophosphorylated. Loss of mitochondrial membrane potential results in the precursor accumulating on the outer mitochondrial membrane (OMM) where it is activated by autophosphorylation. Autophosphorylation at Ser-227 and Ser-401 is sufficient and essential for selective recruitment of PRKN to depolarized mitochondria, via PINK1-dependent phosphorylation of ubiquitin and maybe PRKN.

Its subcellular location is the mitochondrion outer membrane. The protein resides in the mitochondrion inner membrane. It is found in the cytoplasm. It localises to the cytosol. It catalyses the reaction L-seryl-[protein] + ATP = O-phospho-L-seryl-[protein] + ADP + H(+). The catalysed reaction is L-threonyl-[protein] + ATP = O-phospho-L-threonyl-[protein] + ADP + H(+). Serine/threonine-protein kinase which acts as a sensor of mitochondrial damage and protects against mitochondrial dysfunction during cellular stress. It phosphorylates mitochondrial proteins to coordinate mitochondrial quality control mechanisms that remove and replace dysfunctional mitochondrial components. Depending on the severity of mitochondrial damage, activity ranges from preventing apoptosis and stimulating mitochondrial biogenesis to eliminating severely damaged mitochondria via PINK1-PRKN-dependent mitophagy. When cellular stress results in irreversible mitochondrial damage, PINK1 accumulates at the outer mitochondrial membrane (OMM) where it phosphorylates pre-existing polyubiquitin chains at 'Ser-65', recruits PRKN from the cytosol to the OMM and activates PRKN by phosphorylation at 'Ser-65'; activated PRKN then ubiquinates VDAC1 and other OMM proteins to initiate mitophagy. The PINK1-PRKN pathway also promotes fission of damaged mitochondria through phosphorylation and PRKN-dependent degradation of mitochondrial proteins involved in fission such as MFN2. This prevents the refusion of unhealthy mitochondria with the mitochondrial network or initiates mitochondrial fragmentation facilitating their later engulfment by autophagosomes. Also promotes mitochondrial fission independently of PRKN and ATG7-mediated mitophagy, via the phosphorylation and activation of DNM1L. Regulates motility of damaged mitochondria by promoting the ubiquitination and subsequent degradation of MIRO1 and MIRO2; in motor neurons, this likely inhibits mitochondrial intracellular anterograde transport along the axons which probably increases the chance of the mitochondria undergoing mitophagy in the soma. Required for ubiquinone reduction by mitochondrial complex I by mediating phosphorylation of complex I subunit NDUFA10. Phosphorylates LETM1, positively regulating its mitochondrial calcium transport activity. The polypeptide is Serine/threonine-protein kinase PINK1, mitochondrial (Rattus norvegicus (Rat)).